The chain runs to 347 residues: Ribosomal RNA small subunit methyltransferase C (347 aa).

Belongs to the methyltransferase superfamily. RsmC family. As to quaternary structure, monomer.

It localises to the cytoplasm. It catalyses the reaction guanosine(1207) in 16S rRNA + S-adenosyl-L-methionine = N(2)-methylguanosine(1207) in 16S rRNA + S-adenosyl-L-homocysteine + H(+). Its function is as follows. Specifically methylates the guanine in position 1207 of 16S rRNA in the 30S particle. The protein is Ribosomal RNA small subunit methyltransferase C of Shewanella baltica (strain OS155 / ATCC BAA-1091).